The chain runs to 236 residues: Phosphoribosylaminoimidazole-succinocarboxamide synthase (236 aa).

This sequence belongs to the SAICAR synthetase family.

It catalyses the reaction 5-amino-1-(5-phospho-D-ribosyl)imidazole-4-carboxylate + L-aspartate + ATP = (2S)-2-[5-amino-1-(5-phospho-beta-D-ribosyl)imidazole-4-carboxamido]succinate + ADP + phosphate + 2 H(+). The protein operates within purine metabolism; IMP biosynthesis via de novo pathway; 5-amino-1-(5-phospho-D-ribosyl)imidazole-4-carboxamide from 5-amino-1-(5-phospho-D-ribosyl)imidazole-4-carboxylate: step 1/2. The sequence is that of Phosphoribosylaminoimidazole-succinocarboxamide synthase from Coprothermobacter proteolyticus (strain ATCC 35245 / DSM 5265 / OCM 4 / BT).